The primary structure comprises 292 residues: MSYAKEIDTLNQHIADFNKKINVSFEFFPPKNEKMETLLWDSIHRLKVLKPKFVSVTYGANSGERDRTHGIVKAIKQETGLEAAPHLTGIDATPEELKQIARDYWDSGIRRIVALRGDEPKGYAKKPFYASDLVELLRSVADFDISVAAYPEVHPEAKSAQADLINLKRKIDAGANHVITQFFFDIENYLRFRDRCASIGIDTEIVPGILPVTNFKQLQKMASFTNVKIPAWLVKAYDGLDNDPTTRNLVAASVAMDMVKILSREGVNDFHFYTLNRSELTYAICHMLGVRP.

Glu26 functions as the Proton donor/acceptor in the catalytic mechanism. Residue Thr57 participates in NADH binding. Residues Tyr58, Ala60, His86, Arg116, Gly117, Asp118, Ala130, Tyr150, His154, Ala157, Asp163, Asn166, Arg169, and Lys170 each coordinate FAD. Asp118 provides a ligand contact to (6S)-5-methyl-5,6,7,8-tetrahydrofolate. Gln181 lines the NADH pocket. (6S)-5-methyl-5,6,7,8-tetrahydrofolate contacts are provided by Gln181, Gln217, and Arg277.

It belongs to the methylenetetrahydrofolate reductase family. FAD serves as cofactor.

The enzyme catalyses (6S)-5-methyl-5,6,7,8-tetrahydrofolate + NAD(+) = (6R)-5,10-methylene-5,6,7,8-tetrahydrofolate + NADH + H(+). It participates in one-carbon metabolism; tetrahydrofolate interconversion. It functions in the pathway amino-acid biosynthesis; L-methionine biosynthesis via de novo pathway. In terms of biological role, catalyzes the NADH-dependent reduction of 5,10-methylenetetrahydrofolate to 5-methyltetrahydrofolate. Is required to provide the methyl group necessary for methionine synthetase to convert homocysteine to methionine; the methyl group is given by 5-methyltetrahydrofolate. The sequence is that of 5,10-methylenetetrahydrofolate reductase (metF) from Haemophilus influenzae (strain ATCC 51907 / DSM 11121 / KW20 / Rd).